A 1436-amino-acid chain; its full sequence is DNA-directed RNA polymerase subunit beta' (1436 aa).

4 residues coordinate Zn(2+): Cys70, Cys72, Cys85, and Cys88. Positions 481, 483, and 485 each coordinate Mg(2+). Residues Cys829, Cys903, Cys910, and Cys913 each contribute to the Zn(2+) site.

It belongs to the RNA polymerase beta' chain family. As to quaternary structure, the RNAP catalytic core consists of 2 alpha, 1 beta, 1 beta' and 1 omega subunit. When a sigma factor is associated with the core the holoenzyme is formed, which can initiate transcription. Requires Mg(2+) as cofactor. It depends on Zn(2+) as a cofactor.

It carries out the reaction RNA(n) + a ribonucleoside 5'-triphosphate = RNA(n+1) + diphosphate. DNA-dependent RNA polymerase catalyzes the transcription of DNA into RNA using the four ribonucleoside triphosphates as substrates. The protein is DNA-directed RNA polymerase subunit beta' of Flavobacterium johnsoniae (strain ATCC 17061 / DSM 2064 / JCM 8514 / BCRC 14874 / CCUG 350202 / NBRC 14942 / NCIMB 11054 / UW101) (Cytophaga johnsonae).